The following is a 648-amino-acid chain: MIKITLPDGSIREFAQGVTPMEVAKNISEGFARNVISASFNGTTIETETPLTTDGNLILYTWNDAEGKKAFWHSTSHVMAQALEELYPGIKLTLGPAIANGFYYDVDFEDQKISEADFKKIEDRILEIARGKFDFKMRPVTKAEALEMYKDNVYKTELISNLEDGTITFCDHATFTDLCRGGHIPNTGIIKAVKIMSVAGAYWRGDEKNKQLTRVYGTSFPKQKDLTEYLELLEEAKRRDHRKLGKELELFAFSQKVGQGLPLWLPKGAALRDRLEQFLKRAQKKAGYEQVVSPHIGQKELYVTSGHYAKYGADSFQPIHTPAEGEEFLLKPMNCPHHCEIYNVRPWSYKDLPKRYAEFGTVYRYEQSGELHGLTRVRGFTQDDAHIFCTPEQLDEEFKKVIDLVLYVFGSLGFENFTAQISLRDQEDREKYIGTDENWEKAENAIINAAKDKGLNTVVEYGEAAFYGPKLDFMVKDALGRQWQLGTIQVDYNLPERFELTYKGADNELHRPVMIHRAPFGSMERFIAILLEHTAGNFPLWLMPEQAIILSLSEKYENYAKKVLDLLENHEIRALIDNRNETIGKKIRDAEMQKIPFMLIVGEEEEKNGTISIRRHGQEGKGNITVSIEEFASIVDEEIKKTLKVFTV.

Residues 1 to 61 (MIKITLPDGS…TTDGNLILYT (61 aa)) enclose the TGS domain. Positions 240 to 539 (DHRKLGKELE…LLEHTAGNFP (300 aa)) are catalytic. Zn(2+) contacts are provided by Cys335, His386, and His516.

This sequence belongs to the class-II aminoacyl-tRNA synthetase family. Homodimer. Zn(2+) is required as a cofactor.

It is found in the cytoplasm. It catalyses the reaction tRNA(Thr) + L-threonine + ATP = L-threonyl-tRNA(Thr) + AMP + diphosphate + H(+). Its function is as follows. Catalyzes the attachment of threonine to tRNA(Thr) in a two-step reaction: L-threonine is first activated by ATP to form Thr-AMP and then transferred to the acceptor end of tRNA(Thr). Also edits incorrectly charged L-seryl-tRNA(Thr). The sequence is that of Threonine--tRNA ligase from Flavobacterium johnsoniae (strain ATCC 17061 / DSM 2064 / JCM 8514 / BCRC 14874 / CCUG 350202 / NBRC 14942 / NCIMB 11054 / UW101) (Cytophaga johnsonae).